Here is a 252-residue protein sequence, read N- to C-terminus: 2,5-diamino-6-ribosylamino-4(3H)-pyrimidinone 5'-phosphate reductase (252 aa).

NADP(+) is bound by residues Thr80, Asp84, Val166, and 189–193 (GGIVI).

Belongs to the HTP reductase family. Homodimer.

The enzyme catalyses 2,5-diamino-6-(1-D-ribitylamino)pyrimidin-4(3H)-one 5'-phosphate + NADP(+) = 2,5-diamino-6-(1-D-ribosylamino)pyrimidin-4(3H)-one 5'-phosphate + NADPH + H(+). It catalyses the reaction 2,5-diamino-6-(1-D-ribitylamino)pyrimidin-4(3H)-one 5'-phosphate + NAD(+) = 2,5-diamino-6-(1-D-ribosylamino)pyrimidin-4(3H)-one 5'-phosphate + NADH + H(+). Its pathway is cofactor biosynthesis; riboflavin biosynthesis. Functionally, catalyzes an early step in riboflavin biosynthesis, the NADPH-dependent reduction of the ribose side chain of 2,5-diamino-6-ribosylamino-4(3H)-pyrimidinone 5'-phosphate, yielding 2,5-diamino-6-ribitylamino-4(3H)-pyrimidinone 5'-phosphate. The polypeptide is 2,5-diamino-6-ribosylamino-4(3H)-pyrimidinone 5'-phosphate reductase (RIB7) (Kluyveromyces lactis (strain ATCC 8585 / CBS 2359 / DSM 70799 / NBRC 1267 / NRRL Y-1140 / WM37) (Yeast)).